A 216-amino-acid chain; its full sequence is V-type ATP synthase subunit D (216 aa).

It belongs to the V-ATPase D subunit family.

Its function is as follows. Produces ATP from ADP in the presence of a proton gradient across the membrane. The protein is V-type ATP synthase subunit D of Clostridium botulinum (strain ATCC 19397 / Type A).